Reading from the N-terminus, the 201-residue chain is Large ribosomal subunit protein uL4 (201 aa).

The disordered stretch occupies residues 45-71 (AQKTRAEVTGSGKKPWRQKGTGRARAG).

This sequence belongs to the universal ribosomal protein uL4 family. As to quaternary structure, part of the 50S ribosomal subunit.

One of the primary rRNA binding proteins, this protein initially binds near the 5'-end of the 23S rRNA. It is important during the early stages of 50S assembly. It makes multiple contacts with different domains of the 23S rRNA in the assembled 50S subunit and ribosome. In terms of biological role, forms part of the polypeptide exit tunnel. The polypeptide is Large ribosomal subunit protein uL4 (Shewanella sp. (strain MR-4)).